The chain runs to 358 residues: Neuronal-specific septin-3 (358 aa).

Basic and acidic residues predominate over residues 1-10 (MSKGLPETRT). The disordered stretch occupies residues 1–30 (MSKGLPETRTDAAMSELVPEPRPKPAVPMK). Residues 58–331 (TGFDFNIMVV…ETYRAKRLND (274 aa)) enclose the Septin-type G domain. The segment at 68-75 (GQSGLGKS) is G1 motif. 68–75 (GQSGLGKS) serves as a coordination point for GTP. Serine 91 is subject to Phosphoserine. Threonine 102 provides a ligand contact to GTP. The interval 125-128 (DTPG) is G3 motif. The segment at 207-210 (AKAD) is G4 motif. GTP-binding positions include 208-216 (KADTMTLEE), glycine 265, and arginine 280.

This sequence belongs to the TRAFAC class TrmE-Era-EngA-EngB-Septin-like GTPase superfamily. Septin GTPase family. As to quaternary structure, septins polymerize into heterooligomeric protein complexes that form filaments, and can associate with cellular membranes, actin filaments and microtubules. GTPase activity is required for filament formation. Post-translationally, phosphorylated by PKG on serine residues. Phosphorylated by PKG on Ser-91. In terms of tissue distribution, brain-specific.

Its subcellular location is the cytoplasm. It localises to the cytoskeleton. The protein resides in the synapse. Filament-forming cytoskeletal GTPase. May play a role in cytokinesis (Potential). The protein is Neuronal-specific septin-3 of Homo sapiens (Human).